The primary structure comprises 272 residues: MPEFLTVVSWPFLILLSFQIGVAAGAPQPWHCAPCTAERLGLCPPVPASCPEISRPAGCGCCPTCALPMGAACGVATARCAQGLSCRALPGEPRPLHALTRGQGACVPEPAAPATSTLFSSQHEEAKAAVVSADELSESPEMTEEQLLDSFHLMAPSREDQPILWNAISTYSSMRAREIADLKKWKEPCQRELYKVLERLAAAQQKAGDEIYKFYLPNCNKNGFYHSKQCETSLDGEAGLCWCVYPWSGKKIPGSLETRGDPNCHQYFNVHN.

Residues 1 to 25 (MPEFLTVVSWPFLILLSFQIGVAAG) form the signal peptide. An IGFBP N-terminal domain is found at 28–109 (QPWHCAPCTA…TRGQGACVPE (82 aa)). 6 disulfides stabilise this stretch: C32-C59, C35-C61, C43-C62, C50-C65, C73-C86, and C80-C106. A phosphoserine mark is found at S139, S157, and S169. T170 is modified (phosphothreonine). Residue Y171 is modified to Phosphotyrosine. The Thyroglobulin type-1 domain maps to 186 to 264 (KEPCQRELYK…SLETRGDPNC (79 aa)). Cystine bridges form between C189/C219, C230/C241, and C243/C264. S255 bears the Phosphoserine mark. Positions 259–261 (RGD) match the Cell attachment site motif.

Binds equally well IGF1 and IGF2. Interacts with integrin ITGA5:ITGB1. Interacts with VHL; this interaction inhibits HIF1A degradation.

The protein localises to the secreted. Multifunctional protein that plays a critical role in regulating the availability of IGFs such as IGF1 and IGF2 to their receptors and thereby regulates IGF-mediated cellular processes including cell migration, proliferation, differentiation or apoptosis in a cell-type specific manner. Also plays a positive role in cell migration by interacting with integrin ITGA5:ITGB1 through its RGD motif. Mechanistically, binding to integrins leads to activation of focal adhesion kinase/PTK2 and stimulation of the mitogen-activated protein kinase (MAPK) pathway. Regulates cardiomyocyte apoptosis by suppressing HIF-1alpha/HIF1A ubiquitination and subsequent degradation. In Mus musculus (Mouse), this protein is Insulin-like growth factor-binding protein 1 (Igfbp1).